The primary structure comprises 460 residues: Adenosylhomocysteinase (460 aa).

3 residues coordinate substrate: threonine 83, aspartate 158, and glutamate 184. Threonine 185–threonine 187 is a binding site for NAD(+). The substrate site is built by lysine 214 and aspartate 218. NAD(+)-binding positions include asparagine 219, glycine 248–glycine 253, glutamate 271, isoleucine 327–histidine 329, and asparagine 373.

Belongs to the adenosylhomocysteinase family. NAD(+) serves as cofactor.

Its subcellular location is the cytoplasm. It catalyses the reaction S-adenosyl-L-homocysteine + H2O = L-homocysteine + adenosine. It participates in amino-acid biosynthesis; L-homocysteine biosynthesis; L-homocysteine from S-adenosyl-L-homocysteine: step 1/1. May play a key role in the regulation of the intracellular concentration of adenosylhomocysteine. The chain is Adenosylhomocysteinase from Bdellovibrio bacteriovorus (strain ATCC 15356 / DSM 50701 / NCIMB 9529 / HD100).